We begin with the raw amino-acid sequence, 401 residues long: Argininosuccinate synthase (401 aa).

ATP is bound by residues 7–15 (AYSGGLDTS) and Ala34. L-citrulline is bound by residues Tyr85 and Ser90. Gly115 serves as a coordination point for ATP. The L-aspartate site is built by Thr117, Asn121, and Asp122. Asn121 serves as a coordination point for L-citrulline. L-citrulline is bound by residues Arg125, Ser174, Ser183, Glu259, and Tyr271.

This sequence belongs to the argininosuccinate synthase family. Type 1 subfamily. Homotetramer.

The protein resides in the cytoplasm. It catalyses the reaction L-citrulline + L-aspartate + ATP = 2-(N(omega)-L-arginino)succinate + AMP + diphosphate + H(+). Its pathway is amino-acid biosynthesis; L-arginine biosynthesis; L-arginine from L-ornithine and carbamoyl phosphate: step 2/3. The protein is Argininosuccinate synthase of Pelotomaculum thermopropionicum (strain DSM 13744 / JCM 10971 / SI).